The primary structure comprises 414 residues: Coenzyme A biosynthesis bifunctional protein CoaBC (414 aa).

Positions 1–191 (MSARKRIVVG…ALPYDMAGVK (191 aa)) are phosphopantothenoylcysteine decarboxylase. Positions 192-414 (ALVTAGGTRE…IAAFLKSQDG (223 aa)) are phosphopantothenate--cysteine ligase. CTP contacts are provided by residues 275–277 (MAA), D281, K291, 293–294 (KK), 308–311 (DDVL), F332, K350, and K354.

This sequence in the N-terminal section; belongs to the HFCD (homo-oligomeric flavin containing Cys decarboxylase) superfamily. The protein in the C-terminal section; belongs to the PPC synthetase family. As to quaternary structure, homododecamer. The cofactor is Mg(2+). It depends on FMN as a cofactor.

The enzyme catalyses N-[(R)-4-phosphopantothenoyl]-L-cysteine + H(+) = (R)-4'-phosphopantetheine + CO2. The catalysed reaction is (R)-4'-phosphopantothenate + L-cysteine + CTP = N-[(R)-4-phosphopantothenoyl]-L-cysteine + CMP + diphosphate + H(+). The protein operates within cofactor biosynthesis; coenzyme A biosynthesis; CoA from (R)-pantothenate: step 2/5. It participates in cofactor biosynthesis; coenzyme A biosynthesis; CoA from (R)-pantothenate: step 3/5. Two related chemical scaffolds that potently inhibit the activity of the CoaB moiety of CoaBC through a cryptic allosteric site that sits in the dimer interface region of the CoaB enzyme were identified. Its function is as follows. Catalyzes two sequential steps in the biosynthesis of coenzyme A. In the first step cysteine is conjugated to 4'-phosphopantothenate to form 4-phosphopantothenoylcysteine. In the second step the latter compound is decarboxylated to form 4'-phosphopantotheine. The chain is Coenzyme A biosynthesis bifunctional protein CoaBC from Mycolicibacterium smegmatis (strain ATCC 700084 / mc(2)155) (Mycobacterium smegmatis).